A 220-amino-acid chain; its full sequence is GTP cyclohydrolase 1 (220 aa).

Residues C109, H112, and C180 each coordinate Zn(2+).

Belongs to the GTP cyclohydrolase I family. In terms of assembly, homomer.

The catalysed reaction is GTP + H2O = 7,8-dihydroneopterin 3'-triphosphate + formate + H(+). The protein operates within cofactor biosynthesis; 7,8-dihydroneopterin triphosphate biosynthesis; 7,8-dihydroneopterin triphosphate from GTP: step 1/1. The polypeptide is GTP cyclohydrolase 1 (Pectobacterium carotovorum subsp. carotovorum (strain PC1)).